The sequence spans 938 residues: Chaperone protein ClpD1, chloroplastic (938 aa).

The N-terminal 83 residues, 1–83, are a transit peptide targeting the chloroplast; that stretch reads MEVCCCSTSS…FERFTERAVK (83 aa). Repeat regions lie at residues 84–145 and 159–224; these read AVVL…TPGA and FSGS…LQAE. Residues 84–224 form the Clp R domain; sequence AVVLSQREAK…SVALTRLQAE (141 aa). The interval 234-255 is disordered; that stretch reads GASSFKVPKKSPAGAGRSAFSK. Positions 266–519 are i; that stretch reads LDQFCLDLTT…RMESFNRKKE (254 aa). Residues 311–318 and 660–667 contribute to the ATP site; these read GEAGVGKT and GPTGVGKT. Residues 586-777 form an II region; it reads VGTEEIARVA…LIVMTSNIGS (192 aa).

The protein belongs to the ClpA/ClpB family. ClpD subfamily. In terms of tissue distribution, expressed in stems, culms and leaves.

The protein resides in the plastid. It is found in the chloroplast. Functionally, molecular chaperone that may function in heat stress response. May interact with a ClpP-like protease involved in degradation of denatured proteins in the chloroplast. Chaperone involved in response to abiotic stresses. Plays a positive role during dehydration and salt stress. The chain is Chaperone protein ClpD1, chloroplastic from Oryza sativa subsp. japonica (Rice).